A 361-amino-acid chain; its full sequence is Chitin synthase export chaperone (361 aa).

The next 7 helical transmembrane spans lie at 48–68 (IIFQPATCILHIAALVMATIM), 86–106 (LFFYMYIWVELFAIFLDSAII), 119–139 (IYAGSVGALYWCLLLNGFVGF), 150–170 (LWFLRISSLVVGAVCFGIPVA), 184–204 (TVGLFITYLVFPCVCVLIYFI), 218–238 (WVIGDLLFMAGFYIAGVLLLV), and 250–270 (HYVDGVFFSTLAFLFAVMMVY).

It belongs to the CHS7 family. As to quaternary structure, interacts with CHS3.

Its subcellular location is the endoplasmic reticulum membrane. Chaperone required for the export of the chitin synthase CHS3 from the endoplasmic reticulum. This chain is Chitin synthase export chaperone (CHS7), found in Cryptococcus neoformans var. neoformans serotype D (strain JEC21 / ATCC MYA-565) (Filobasidiella neoformans).